A 223-amino-acid polypeptide reads, in one-letter code: AN1-type zinc finger protein 6 (223 aa).

The A20-type zinc finger occupies 8 to 42; sequence SQAPMLCSTGCGFYGNPRTNGMCSVCYKEHLQRQN. Cysteine 14, cysteine 18, cysteine 30, and cysteine 33 together coordinate Zn(2+). The tract at residues 41–155 is disordered; that stretch reads QNSSNGRISP…PSEEQSKSLE (115 aa). Residue serine 49 is modified to Phosphoserine. Polar residues-rich tracts occupy residues 77–110 and 137–148; these read ALDS…STSV and SSVSDTTQQPSE. An AN1-type zinc finger spans residues 158–204; that stretch reads KQKKNRCFMCRKKVGLTGFECRCGNVYCGVHRYSDVHNCSYNYKADA. Residues cysteine 164, cysteine 167, cysteine 178, cysteine 180, cysteine 185, histidine 188, histidine 194, and cysteine 196 each contribute to the Zn(2+) site. At lysine 219 the chain carries N6-acetyllysine.

Interacts with PKN1. Interacts with TRAF2. Interacts with mono- and polyubiquitin. Interacts with PEX6. Interacts with PEX5 (Cys-linked ubiquitinated).

It is found in the cytoplasm. Involved in regulation of TNF-alpha induced NF-kappa-B activation and apoptosis. Involved in modulation of 'Lys-48'-linked polyubiquitination status of TRAF2 and decreases association of TRAF2 with RIPK1. Required for PTS1 target sequence-dependent protein import into peroxisomes and PEX5 stability; may cooperate with PEX6. In vitro involved in PEX5 export from the cytosol to peroxisomes. This is AN1-type zinc finger protein 6 (Zfand6) from Mus musculus (Mouse).